We begin with the raw amino-acid sequence, 350 residues long: Methionine import ATP-binding protein MetN (350 aa).

The 237-residue stretch at Leu9 to Ile245 folds into the ABC transporter domain. Gly43 to Ser50 is a binding site for ATP.

It belongs to the ABC transporter superfamily. Methionine importer (TC 3.A.1.24) family. As to quaternary structure, the complex is composed of two ATP-binding proteins (MetN), two transmembrane proteins (MetI) and a solute-binding protein (MetQ).

Its subcellular location is the cell membrane. It carries out the reaction L-methionine(out) + ATP + H2O = L-methionine(in) + ADP + phosphate + H(+). The enzyme catalyses D-methionine(out) + ATP + H2O = D-methionine(in) + ADP + phosphate + H(+). Part of the ABC transporter complex MetNIQ involved in methionine import. Responsible for energy coupling to the transport system. The polypeptide is Methionine import ATP-binding protein MetN (Lacticaseibacillus paracasei (strain ATCC 334 / BCRC 17002 / CCUG 31169 / CIP 107868 / KCTC 3260 / NRRL B-441) (Lactobacillus paracasei)).